The primary structure comprises 302 residues: Syntaxin-17 (302 aa).

An N-acetylserine modification is found at Ser2. Residues 2–228 are Cytoplasmic-facing; that stretch reads SEDEEKVKLR…KNLGKAAKYK (227 aa). Lys41 bears the N6-acetyllysine mark. The stretch at 53–123 forms a coiled coil; it reads EEHINAGRTV…EELKKQFNDE (71 aa). At Tyr157 the chain carries Phosphotyrosine; by ABL1. The 63-residue stretch at 162 to 224 folds into the t-SNARE coiled-coil homology domain; sequence IPQDQNAAES…EEGTKNLGKA (63 aa). Residues 229–249 form a helical membrane-spanning segment; it reads LAALPVAGALIGGMVGGPIGL. Residues 229 to 275 are necessary and sufficient for localization to autophagosome; the sequence is LAALPVAGALIGGMVGGPIGLLAGFKVAGIAAALGGGVLGFTGGKLI. The Lumenal segment spans residues 250–254; it reads LAGFK. The chain crosses the membrane as a helical span at residues 255–275; that stretch reads VAGIAAALGGGVLGFTGGKLI. Topologically, residues 276–302 are cytoplasmic; the sequence is QRKKQKMMEKLTSSCPDLPSQTDKKCS. Phosphoserine is present on Ser289. Positions 299 to 302 match the Endoplasmic reticulum retention signal motif; the sequence is KKCS.

The protein belongs to the syntaxin family. In terms of assembly, forms a SNARE complex composed of VAMP8, SNAP29 and STX17 involved in fusion of autophagosome with lysosome. Interacts with VAMP7 and VTI1B. Probably interacts with BET1, SCFD1 and SEC22B. Interacts with PTPN2 and ABL1; involved in STX17 phosphorylation. Interacts with COPB1. Interacts with TMED9 and TMED10; the interaction is direct. Interacts with ATG14. Interacts with RUBCNL/PACER; promoting targeting of RUBCNL/PACER to autophagosome. Interacts with VAMP8, SNAP29, VPS39 and VPS41; these interactions are increased in the absence of TMEM39A. Interacts with IRGM; promoting STX17 recruitment to autophagosomes. Interacts with ATG8 proteins GABARAP and MAP1LC3B. Interacts with RNF115; this interaction enhances STX17 stability which in turn promotes autophagosome maturation. Interacts with RAB39A (GTP-bound); the interaction promotes autophagosome-lysosome membrane fusion driven by STX17-SNAP29-VAMP8. Interacts with RAB39B; the interaction may promote a different fonction in autophagy as compared with RAB39A. As to quaternary structure, (Microbial infection) The interactions with VAMP8, SNAP29 and VPS41 are decreased in presence of SARS coronavirus-2/SARS-CoV-2 ORF3A protein. Phosphorylated at Tyr-157 probably by ABL1. Dephosphorylation by PTPN2; regulates exit from the endoplasmic reticulum. Post-translationally, (Microbial infection) Cleaved by the L.pneumophila serine protease Lpg1137, impairing endoplasmic reticulum-mitochondria communication, leading to inhibit autophagy.

Its subcellular location is the endoplasmic reticulum membrane. The protein resides in the smooth endoplasmic reticulum membrane. It is found in the endoplasmic reticulum-Golgi intermediate compartment membrane. The protein localises to the cytoplasmic vesicle. It localises to the autophagosome membrane. Its subcellular location is the COPII-coated vesicle membrane. The protein resides in the cytoplasm. It is found in the cytosol. The protein localises to the mitochondrion membrane. It localises to the autolysosome membrane. SNAREs, soluble N-ethylmaleimide-sensitive factor-attachment protein receptors, are essential proteins for fusion of cellular membranes. SNAREs localized on opposing membranes assemble to form a trans-SNARE complex, an extended, parallel four alpha-helical bundle that drives membrane fusion. STX17 is a SNARE of the autophagosome involved in autophagy through the direct control of autophagosome membrane fusion with the lysosome membrane. May also play a role in the early secretory pathway where it may maintain the architecture of the endoplasmic reticulum-Golgi intermediate compartment/ERGIC and Golgi and/or regulate transport between the endoplasmic reticulum, the ERGIC and the Golgi. This Homo sapiens (Human) protein is Syntaxin-17.